We begin with the raw amino-acid sequence, 501 residues long: Prostacyclin synthase (501 aa).

A helical membrane pass occupies residues 1–21 (MSWAALLGLLAVLLLLLLLLS). Substrate contacts are provided by residues R107, L113, N288, 359-360 (TR), and R383. C442 is a binding site for heme.

Belongs to the cytochrome P450 family. The cofactor is heme.

The protein localises to the endoplasmic reticulum membrane. It carries out the reaction prostaglandin H2 = prostaglandin I2. The enzyme catalyses a hydroperoxyeicosatetraenoate = an oxoeicosatetraenoate + H2O. The catalysed reaction is (15S)-hydroperoxy-(5Z,8Z,11Z,13E)-eicosatetraenoate = 15-oxo-(5Z,8Z,11Z,13E)-eicosatetraenoate + H2O. It catalyses the reaction (15S)-hydroperoxy-(5Z,8Z,11Z,13E)-eicosatetraenoate + AH2 = (15S)-hydroxy-(5Z,8Z,11Z,13E)-eicosatetraenoate + A + H2O. Its function is as follows. Catalyzes the biosynthesis and metabolism of eicosanoids. Catalyzes the isomerization of prostaglandin H2 to prostacyclin (= prostaglandin I2), a potent mediator of vasodilation and inhibitor of platelet aggregation. Additionally, displays dehydratase activity, toward hydroperoxyeicosatetraenoates (HPETEs), especially toward (15S)-hydroperoxy-(5Z,8Z,11Z,13E)-eicosatetraenoate (15(S)-HPETE). In Rattus norvegicus (Rat), this protein is Prostacyclin synthase (Ptgis).